A 252-amino-acid polypeptide reads, in one-letter code: Small ribosomal subunit protein eS1 (252 aa).

This sequence belongs to the eukaryotic ribosomal protein eS1 family. Component of the small ribosomal subunit. Mature ribosomes consist of a small (40S) and a large (60S) subunit. The 40S subunit contains about 33 different proteins and 1 molecule of RNA (18S). The 60S subunit contains about 49 different proteins and 3 molecules of RNA (25S, 5.8S and 5S).

It localises to the cytoplasm. The chain is Small ribosomal subunit protein eS1 from Enterocytozoon bieneusi (strain H348) (Microsporidian parasite).